The chain runs to 312 residues: Olfactory receptor 5J2 (312 aa).

The Extracellular segment spans residues M1 to A25. N5 carries N-linked (GlcNAc...) asparagine glycosylation. A helical membrane pass occupies residues V26–I46. Over L47–K54 the chain is Cytoplasmic. The helical transmembrane segment at L55–S75 threads the bilayer. Topologically, residues A76–V99 are extracellular. C97 and C189 are oxidised to a cystine. Residues Q100–Y120 form a helical membrane-spanning segment. Topologically, residues D121–R139 are cytoplasmic. A helical membrane pass occupies residues K140 to T160. The Extracellular portion of the chain corresponds to I161–E196. A helical membrane pass occupies residues L197–S217. Residues Y218–A237 are Cytoplasmic-facing. A helical transmembrane segment spans residues F238 to S258. The Extracellular portion of the chain corresponds to Y259–E271. Residues K272–L292 form a helical membrane-spanning segment. The Cytoplasmic segment spans residues R293–C312.

Belongs to the G-protein coupled receptor 1 family.

It is found in the cell membrane. Functionally, odorant receptor. The chain is Olfactory receptor 5J2 (OR5J2) from Homo sapiens (Human).